Reading from the N-terminus, the 475-residue chain is MSPQTETKASVGFKAGVKEYKLTYYTPDYEPHDHDILAAFRVTPQPGVPPEEAGAAVAAESSTGTWTTVWTDGLTSLDRYKGRCYHIEPVPGEENQFIAYVAYPLDLFEEGSVTNMFTSIVGNVFGFKALRALRLEDLRIPPAYTKTFQGPPHGIQVERDKLNKYGRPLLGCTIKPKLGLSAKNYGRAVYECLRGGLDFTKDDENVNSQPFMRWRDRFLFCAEALFKSQVETGEIKGHYLNATAGTCEEMIKRAVFARELGVPIVMHDYLTGGFTANTSLAHYCRDNGLLLHIHRAMHAVIDRQKNHGIHFRVLAKALRLSGGDHIHSGTVVGKLEGERDITLGFVDLLRDDFVEKDRSRGIYFTQPWVSLPGVIPVASGGIHVWHMPALTEIFGDDSVLQFGGGTLGHPWGNAPGAVANRVALEACVQARNEGRDLAREGNDIIRKAAKWSPELAAACEVWKEIKFEFQAMDTL.

Residues 1–2 (MS) constitute a propeptide that is removed on maturation. Proline 3 is modified (N-acetylproline). Lysine 14 is modified (N6,N6,N6-trimethyllysine). Substrate is bound by residues asparagine 123 and threonine 173. Lysine 175 acts as the Proton acceptor in catalysis. Lysine 177 lines the substrate pocket. Mg(2+)-binding residues include lysine 201, aspartate 203, and glutamate 204. Lysine 201 bears the N6-carboxylysine mark. The Proton acceptor role is filled by histidine 294. Substrate-binding residues include arginine 295, histidine 327, and serine 379.

The protein belongs to the RuBisCO large chain family. Type I subfamily. In terms of assembly, heterohexadecamer of 8 large chains and 8 small chains; disulfide-linked. The disulfide link is formed within the large subunit homodimers. Requires Mg(2+) as cofactor. In terms of processing, the disulfide bond which can form in the large chain dimeric partners within the hexadecamer appears to be associated with oxidative stress and protein turnover.

It is found in the plastid. Its subcellular location is the chloroplast. The enzyme catalyses 2 (2R)-3-phosphoglycerate + 2 H(+) = D-ribulose 1,5-bisphosphate + CO2 + H2O. It carries out the reaction D-ribulose 1,5-bisphosphate + O2 = 2-phosphoglycolate + (2R)-3-phosphoglycerate + 2 H(+). RuBisCO catalyzes two reactions: the carboxylation of D-ribulose 1,5-bisphosphate, the primary event in carbon dioxide fixation, as well as the oxidative fragmentation of the pentose substrate in the photorespiration process. Both reactions occur simultaneously and in competition at the same active site. The protein is Ribulose bisphosphate carboxylase large chain of Fagopyrum esculentum subsp. ancestrale (Wild buckwheat).